The primary structure comprises 366 residues: Nitronate monooxygenase (366 aa).

Residues asparagine 74, glutamine 181, glycine 186, glycine 223, and 242 to 245 (QLGT) each bind FMN.

It belongs to the nitronate monooxygenase family. NMO class I subfamily. FMN is required as a cofactor.

It carries out the reaction 3 propionate 3-nitronate + 3 O2 + H2O = 3 3-oxopropanoate + 2 nitrate + nitrite + H2O2 + 3 H(+). Nitronate monooxygenase that uses molecular oxygen to catalyze the oxidative denitrification of alkyl nitronates. Acts on propionate 3-nitronate (P3N), the presumed physiological substrate. Is likely involved in the degradation of P3N, that allows B.phytofirmans PsJN to grow on 3-nitropropionate/P3N as the sole source of nitrogen and carbon. Also probably functions in the detoxification of P3N, a metabolic poison produced by plants and fungi as a defense mechanism. Cannot oxidize nitroalkanes such as 3-nitropropionate, nitroethane, or 1-nitropropane. This Paraburkholderia phytofirmans (strain DSM 17436 / LMG 22146 / PsJN) (Burkholderia phytofirmans) protein is Nitronate monooxygenase.